A 337-amino-acid chain; its full sequence is Viral cathepsin (337 aa).

A signal peptide spans 1–16 (MNKILILLLLVSAVLT). Residues 17-126 (SHDQVVAVTI…VVDGPGQRQR (110 aa)) constitute a propeptide, activation peptide. 3 cysteine pairs are disulfide-bonded: Cys-147–Cys-188, Cys-181–Cys-221, and Cys-276–Cys-324. Cys-150 is a catalytic residue. Residues His-283 and Asn-303 contribute to the active site.

This sequence belongs to the peptidase C1 family. In terms of processing, synthesized as an inactive proenzyme and activated by proteolytic removal of the inhibitory propeptide.

The catalysed reaction is Endopeptidase of broad specificity, hydrolyzing substrates of both cathepsin L and cathepsin B.. Functionally, cysteine protease that plays an essential role in host liquefaction to facilitate horizontal transmission of the virus. May participate in the degradation of foreign protein expressed by the baculovirus system. This is Viral cathepsin (VCATH) from Mamestra configurata (bertha armyworm).